A 250-amino-acid chain; its full sequence is uncharacterized protein (250 aa).

Positions 97, 99, and 128 each coordinate a divalent metal cation.

It belongs to the FAH family.

This is an uncharacterized protein from Archaeoglobus fulgidus (strain ATCC 49558 / DSM 4304 / JCM 9628 / NBRC 100126 / VC-16).